The following is a 616-amino-acid chain: Ectonucleoside triphosphate diphosphohydrolase 4 (616 aa).

The Cytoplasmic segment spans residues 1–33 (MGRIGISCLFPASWHFSISPVGCPRILNTNLRQ). Residues 34–54 (IMVISVLAAAVSLLYFSVVII) form a helical membrane-spanning segment. Over 55–559 (RNKYGRLTRD…ASHTHWRGVS (505 aa)) the chain is Lumenal. Catalysis depends on glutamate 222, which acts as the Proton acceptor. Cysteine 368 and cysteine 395 are disulfide-bonded. 2 N-linked (GlcNAc...) asparagine glycosylation sites follow: asparagine 404 and asparagine 407. An intrachain disulfide couples cysteine 461 to cysteine 490. Residues 560–580 (FVYNHYLFSGCFLVVLLAILL) form a helical membrane-spanning segment. At 581-616 (YLLRLRRIHRRTPRSSSAAALWMEEGLPAQNAPGTL) the chain is on the cytoplasmic side.

This sequence belongs to the GDA1/CD39 NTPase family. It depends on Ca(2+) as a cofactor. The cofactor is Mg(2+). As to expression, ubiquitous. Highest expression in testis and lowest in bladder.

Its subcellular location is the cytoplasmic vesicle. It localises to the autophagosome membrane. The protein resides in the lysosome membrane. The protein localises to the golgi apparatus membrane. The enzyme catalyses a ribonucleoside 5'-diphosphate + H2O = a ribonucleoside 5'-phosphate + phosphate + H(+). It carries out the reaction a ribonucleoside 5'-triphosphate + H2O = a ribonucleoside 5'-diphosphate + phosphate + H(+). The catalysed reaction is UDP + H2O = UMP + phosphate + H(+). It catalyses the reaction UTP + H2O = UDP + phosphate + H(+). The enzyme catalyses CTP + H2O = CDP + phosphate + H(+). It carries out the reaction GDP + H2O = GMP + phosphate + H(+). The catalysed reaction is GTP + H2O = GDP + phosphate + H(+). It catalyses the reaction 5-methyl-UTP + H2O = 5-methyl-UDP + phosphate + H(+). Catalyzes the hydrolysis of nucleoside triphosphates and diphosphates in a calcium- or magnesium-dependent manner, with a preference for pyrimidines. Preferentially hydrolyzes UTP and TTP. AMP, ADP, ATP and UMP are not substrates. Preferentially activated by Ca(2+) over Mg(2+). Its function is as follows. Has a broad substrate specificity with the ability of cleaving all nucleotide di- and triphosphates with the exception of adenosine di- and triphosphate (ADP and ATP). Preferentially hydrolyzes CTP, UDP, CDP, GTP and GDP. Can use either Ca(2+) or Mg(2+) equally. This Homo sapiens (Human) protein is Ectonucleoside triphosphate diphosphohydrolase 4.